Consider the following 265-residue polypeptide: Type III pantothenate kinase (265 aa).

6–13 (DVGNTNIV) contributes to the ATP binding site. Substrate contacts are provided by residues Y100 and 107–110 (GADR). Residue D109 is the Proton acceptor of the active site. K(+) is bound at residue D129. An ATP-binding site is contributed by T132. T184 provides a ligand contact to substrate.

This sequence belongs to the type III pantothenate kinase family. In terms of assembly, homodimer. NH4(+) serves as cofactor. It depends on K(+) as a cofactor.

It is found in the cytoplasm. The enzyme catalyses (R)-pantothenate + ATP = (R)-4'-phosphopantothenate + ADP + H(+). It participates in cofactor biosynthesis; coenzyme A biosynthesis; CoA from (R)-pantothenate: step 1/5. Its function is as follows. Catalyzes the phosphorylation of pantothenate (Pan), the first step in CoA biosynthesis. This is Type III pantothenate kinase from Alkaliphilus oremlandii (strain OhILAs) (Clostridium oremlandii (strain OhILAs)).